Consider the following 242-residue polypeptide: Protein fmp-52, mitochondrial (242 aa).

A mitochondrion-targeting transit peptide spans 1-87 (MSTSTPTSTA…VISSLGTTRV (87 aa)). The segment at 33–58 (SSQVQTISRRAPANPTNSSRLSPTVN) is disordered. Polar residues predominate over residues 35-58 (QVQTISRRAPANPTNSSRLSPTVN).

The protein belongs to the FMP52 family.

The protein localises to the mitochondrion outer membrane. This Neurospora crassa (strain ATCC 24698 / 74-OR23-1A / CBS 708.71 / DSM 1257 / FGSC 987) protein is Protein fmp-52, mitochondrial (fmp-52).